Here is a 476-residue protein sequence, read N- to C-terminus: Riboflavin transporter rft-2 (476 aa).

The chain crosses the membrane as a helical span at residues 1–21 (MGCSAATFILVALFGSSSWMG). The Cytoplasmic segment spans residues 22–41 (TNSVWMQLPLLTSELPEQWN). The chain crosses the membrane as a helical span at residues 42 to 62 (LPSYLAGVVQIACIVPLIYTI). Residues 63–75 (LHKGVKSFTIPTA) lie on the Extracellular side of the membrane. The helical transmembrane segment at 76–96 (PLIIALLSLACCCQLGLSFFW) threads the bilayer. Over 97–113 (SDYSEIFGAPRSWPLYS) the chain is Cytoplasmic. Residues 114–134 (LLFGLAIVNAMSNVLFMPFMA) traverse the membrane as a helical segment. Over 135 to 140 (QFHPAY) the chain is Extracellular. A helical membrane pass occupies residues 141 to 161 (LNAYFVGMGLSSLAPSLLSLA). The Cytoplasmic portion of the chain corresponds to 162–185 (QGTSMFKCDEKGVAERFPPNFSVS). The helical transmembrane segment at 186–206 (IFFFVIFSFTCVALFAFIALY) threads the bilayer. At 207–306 (RSGAHTHFAT…HPVDYITGVK (100 aa)) the chain is on the extracellular side. A disordered region spans residues 215–249 (ATPNKKEPNEGTPLKKDLNNTSSSRKGDDEDESPI). A compositionally biased stretch (basic and acidic residues) spans 218–232 (NKKEPNEGTPLKKDL). A glycan (N-linked (GlcNAc...) asparagine) is linked at Asn-233. Residues 307–327 (FTFLLFTTALVNAQMNGIITS) traverse the membrane as a helical segment. The Cytoplasmic segment spans residues 328–342 (VQSYAALPYSQATYH). A helical transmembrane segment spans residues 343 to 363 (FAVTLSNVVSPLSSFLPFFIS). Topologically, residues 364 to 366 (VRS) are extracellular. Residues 367-387 (IPVLAILTACSTAMTAFIVYL) form a helical membrane-spanning segment. The Cytoplasmic segment spans residues 388-393 (AALSPN). A helical membrane pass occupies residues 394 to 414 (LIFNSVTIGSALSIGGSLIAA). The Extracellular segment spans residues 415-437 (GLHSYLRVVFASLLREGHQSESR). A helical membrane pass occupies residues 438–458 (LFWCGVFIQIGSFIGSAVMFP). Topologically, residues 459 to 476 (LVNIAHLFTSAPQCKSIS) are cytoplasmic.

This sequence belongs to the riboflavin transporter family. In terms of tissue distribution, expressed in intestine and pharynx.

It is found in the cell membrane. The catalysed reaction is riboflavin(in) = riboflavin(out). Riboflavin transporter. This chain is Riboflavin transporter rft-2, found in Caenorhabditis elegans.